Reading from the N-terminus, the 86-residue chain is DNA-directed RNA polymerase subunit omega (86 aa).

The protein belongs to the RNA polymerase subunit omega family. As to quaternary structure, the RNAP catalytic core consists of 2 alpha, 1 beta, 1 beta' and 1 omega subunit. When a sigma factor is associated with the core the holoenzyme is formed, which can initiate transcription.

It carries out the reaction RNA(n) + a ribonucleoside 5'-triphosphate = RNA(n+1) + diphosphate. Functionally, promotes RNA polymerase assembly. Latches the N- and C-terminal regions of the beta' subunit thereby facilitating its interaction with the beta and alpha subunits. This is DNA-directed RNA polymerase subunit omega from Psychrobacter arcticus (strain DSM 17307 / VKM B-2377 / 273-4).